Here is a 217-residue protein sequence, read N- to C-terminus: Transmembrane emp24 domain-containing protein p24delta6 (217 aa).

Positions 1 to 26 (MAISPVLFIGLIYLAGGGSLFPGVEA) are cleaved as a signal peptide. Residues 27–186 (IWLTVPESGE…INEKTNTRVN (160 aa)) lie on the Lumenal side of the membrane. Residues 36 to 152 (ERCVYEEIQA…IEGVELEIRR (117 aa)) form the GOLD domain. N-linked (GlcNAc...) asparagine glycosylation is found at N84 and N116. A coiled-coil region spans residues 138–160 (AKKEKIEGVELEIRRSTEYASAI). Omega-N-methylated arginine occurs at positions 170 and 175. A helical membrane pass occupies residues 187–207 (QLGLMSLGVAIVVSISQVLYL). Residues 208–217 (KRYFLKKKLI) are Cytoplasmic-facing. The short motif at 210–211 (YF) is the COPII vesicle coat-binding element. Positions 210–217 (YFLKKKLI) match the COPI vesicle coat-binding motif.

It belongs to the EMP24/GP25L family. Probably oligomerizes with other members of the EMP24/GP25L family. Associates with the COPI vesicle coat (coatomer). Associates with the COPII vesicle coat (coatomer).

The protein localises to the endoplasmic reticulum membrane. Functionally, involved in vesicular protein trafficking. Mainly functions in the early secretory pathway. Thought to act as cargo receptor at the lumenal side for incorporation of secretory cargo molecules into transport vesicles and to be involved in vesicle coat formation at the cytoplasmic side. This chain is Transmembrane emp24 domain-containing protein p24delta6, found in Arabidopsis thaliana (Mouse-ear cress).